The following is a 155-amino-acid chain: Ribosomal RNA large subunit methyltransferase H (155 aa).

Residues Leu-73, Gly-104, and 123-128 (LSALTL) each bind S-adenosyl-L-methionine.

Belongs to the RNA methyltransferase RlmH family. Homodimer.

It localises to the cytoplasm. The enzyme catalyses pseudouridine(1915) in 23S rRNA + S-adenosyl-L-methionine = N(3)-methylpseudouridine(1915) in 23S rRNA + S-adenosyl-L-homocysteine + H(+). Its function is as follows. Specifically methylates the pseudouridine at position 1915 (m3Psi1915) in 23S rRNA. In Coxiella burnetii (strain Dugway 5J108-111), this protein is Ribosomal RNA large subunit methyltransferase H.